Reading from the N-terminus, the 324-residue chain is Lactonase drp35 (324 aa).

Residues E47, S109, G111, D129, T132, Y134, D137, N184, D235, and S236 each contribute to the Ca(2+) site. D235 (proton donor) is an active-site residue.

The protein belongs to the SMP-30/CGR1 family. Requires Ca(2+) as cofactor.

It is found in the cytoplasm. Functionally, exhibits lactonase activity. Acts in cells with perturbed membrane integrity and is possibly related to the membrane homeostasis. The protein is Lactonase drp35 (drp35) of Staphylococcus aureus (strain MW2).